Here is a 346-residue protein sequence, read N- to C-terminus: Structure-specific endonuclease subunit SLX1 (346 aa).

The GIY-YIG domain maps to 10–92 (ALYCVYILRS…TNPHTSLHIP (83 aa)). The SLX1-type zinc finger occupies 238 to 296 (CVVCKEEIDPEEGGLHAVCSNEGCEGVGHLRCWGRYLLKSEEGGGEGAILPVGGRCPRC). A compositionally biased stretch (basic residues) spans 324–336 (KVKRKRAPRKKTA). The disordered stretch occupies residues 324 to 346 (KVKRKRAPRKKTAKTKETREEDG). The segment covering 337-346 (KTKETREEDG) has biased composition (basic and acidic residues).

It belongs to the SLX1 family. As to quaternary structure, forms a heterodimer with SLX4. A divalent metal cation serves as cofactor.

Its subcellular location is the nucleus. In terms of biological role, catalytic subunit of the SLX1-SLX4 structure-specific endonuclease that resolves DNA secondary structures generated during DNA repair and recombination. Has endonuclease activity towards branched DNA substrates, introducing single-strand cuts in duplex DNA close to junctions with ss-DNA. In Podospora anserina (strain S / ATCC MYA-4624 / DSM 980 / FGSC 10383) (Pleurage anserina), this protein is Structure-specific endonuclease subunit SLX1.